The sequence spans 632 residues: tRNA uridine 5-carboxymethylaminomethyl modification enzyme MnmG (632 aa).

FAD-binding positions include 15–20 (GAGHAG), I127, and S182. 276–290 (GPRYCPSIEDKIVRF) is an NAD(+) binding site. Q373 contributes to the FAD binding site.

This sequence belongs to the MnmG family. As to quaternary structure, homodimer. Heterotetramer of two MnmE and two MnmG subunits. Requires FAD as cofactor.

Its subcellular location is the cytoplasm. In terms of biological role, NAD-binding protein involved in the addition of a carboxymethylaminomethyl (cmnm) group at the wobble position (U34) of certain tRNAs, forming tRNA-cmnm(5)s(2)U34. The sequence is that of tRNA uridine 5-carboxymethylaminomethyl modification enzyme MnmG from Streptococcus pyogenes serotype M18 (strain MGAS8232).